The following is a 398-amino-acid chain: O-methyltransferase mpaG (398 aa).

Ser144 contributes to the (4E,8E)-10-(4,6-dihydroxy-7-methyl-3-oxo-1,3-dihydro-2-benzofuran-5-yl)-4,8-dimethyldeca-4,8-dienoate binding site. Ser144 is a binding site for 4-farnesyl-3,5-dihydroxy-6-methylphthalide. Ser144 is a binding site for 6-O-desmethylmycophenolate. Asn197 is an S-adenosyl-L-homocysteine binding site. Tyr199 is a binding site for (4E,8E)-10-(4,6-dihydroxy-7-methyl-3-oxo-1,3-dihydro-2-benzofuran-5-yl)-4,8-dimethyldeca-4,8-dienoate. A 4-farnesyl-3,5-dihydroxy-6-methylphthalide-binding site is contributed by Tyr199. Tyr199 contacts 6-O-desmethylmycophenolate. S-adenosyl-L-homocysteine-binding residues include Tyr203, Asp237, Gly239, His244, Asp245, Asp264, and Arg265. An S-adenosyl-L-methionine-binding site is contributed by Asp264. (4E,8E)-10-(4,6-dihydroxy-7-methyl-3-oxo-1,3-dihydro-2-benzofuran-5-yl)-4,8-dimethyldeca-4,8-dienoate is bound by residues Arg265 and Gln267. Arg265 contacts 6-O-desmethylmycophenolate. S-adenosyl-L-homocysteine is bound by residues Asp286, Ile287, and His302. (4E,8E)-10-(4,6-dihydroxy-7-methyl-3-oxo-1,3-dihydro-2-benzofuran-5-yl)-4,8-dimethyldeca-4,8-dienoate is bound at residue Ser303. Ser303 provides a ligand contact to 4-farnesyl-3,5-dihydroxy-6-methylphthalide. Ser303 contacts 6-O-desmethylmycophenolate. His306 acts as the Proton acceptor in catalysis. Catalysis depends on residues Glu335 and Glu362.

Belongs to the class I-like SAM-binding methyltransferase superfamily. Cation-independent O-methyltransferase family. COMT subfamily. Homodimer.

It is found in the cytoplasm. Its subcellular location is the cytosol. It carries out the reaction (4E,8E)-10-(4,6-dihydroxy-7-methyl-3-oxo-1,3-dihydro-2-benzofuran-5-yl)-4,8-dimethyldeca-4,8-dienoate + S-adenosyl-L-methionine = (4E,8E)-10-(4-hydroxy-6-methoxy-7-methyl-3-oxo-1,3-dihydro-2-benzofuran-5-yl)-4,8-dimethyldeca-4,8-dienoate + S-adenosyl-L-homocysteine + H(+). The enzyme catalyses 4-farnesyl-3,5-dihydroxy-6-methylphthalide + S-adenosyl-L-methionine = 4-farnesyl-3,5-dihydroxy-6-methoxylphthalide + S-adenosyl-L-homocysteine + H(+). It catalyses the reaction 6-O-desmethylmycophenolate + S-adenosyl-L-methionine = mycophenolate + S-adenosyl-L-homocysteine + H(+). Its pathway is secondary metabolite biosynthesis; terpenoid biosynthesis. O-methyltransferase; part of the gene cluster that mediates the biosynthesis of mycophenolic acid (MPA), the first isolated antibiotic natural product in the world obtained from a culture of Penicillium brevicompactum in 1893. MpaG methylates farnesyl-DHMP-3C (FDHMP-3C) to yield MFDHMP-3C. The first step of the pathway is the synthesis of 5-methylorsellinic acid (5MOA) by the cytosolic polyketide synthase mpaC. 5MOA is then converted to the phthalide compound 5,7-dihydroxy-4,6-dimethylphthalide (DHMP) by the endoplasmic reticulum-bound cytochrome P450 monooxygenase mpaDE. MpaDE first catalyzes hydroxylation of 5-MOA to 4,6-dihydroxy-2-(hydroxymethyl)-3-methylbenzoic acid (DHMB). MpaDE then acts as a lactone synthase that catalyzes the ring closure to convert DHMB into DHMP. The next step is the prenylation of DHMP by the Golgi apparatus-associated prenyltransferase mpaA to yield farnesyl-DHMP (FDHMP). The ER-bound oxygenase mpaB then mediates the oxidative cleavage the C19-C20 double bond in FDHMP to yield FDHMP-3C via a mycophenolic aldehyde intermediate. The O-methyltransferase mpaG catalyzes the methylation of FDHMP-3C to yield MFDHMP-3C. MpaG and mpaB can also switch the order in which they act and, in this case, the conversion of FDHMP to MFDHMP-3C can take place via 5-O-methyl-FDHMP (MFDHMP). After the cytosolic methylation of FDHMP-3C, MFDHMP-3C enters into peroxisomes probably via free diffusion due to its low molecular weight. Upon a peroxisomal CoA ligation reaction, catalyzed by a beta-oxidation component enzyme acyl-CoA ligase ACL891, MFDHMP-3C-CoA would then be restricted to peroxisomes for the following beta-oxidation pathway steps. The peroxisomal beta-oxidation machinery than converts MFDHMP-3C-CoA into MPA_CoA, via a beta-oxidation chain-shortening process. Finally mpaH acts as a peroxisomal acyl-CoA hydrolase with high substrate specificity toward MPA-CoA to release the final product MPA. MpaH can also hydrolyze DMMPA-CoA to release demethylmycophenolic acid (DMMPA) that is further converted to MPA by mpaG. This is O-methyltransferase mpaG from Penicillium brevicompactum.